Here is a 326-residue protein sequence, read N- to C-terminus: tRNA-modifying protein YgfZ (326 aa).

Folate is bound by residues tryptophan 27 and tryptophan 189.

This sequence belongs to the tRNA-modifying YgfZ family.

Its subcellular location is the cytoplasm. In terms of biological role, folate-binding protein involved in regulating the level of ATP-DnaA and in the modification of some tRNAs. It is probably a key factor in regulatory networks that act via tRNA modification, such as initiation of chromosomal replication. This chain is tRNA-modifying protein YgfZ, found in Escherichia coli O139:H28 (strain E24377A / ETEC).